The following is a 121-amino-acid chain: UPF0102 protein BT_2236 (121 aa).

The protein belongs to the UPF0102 family.

This Bacteroides thetaiotaomicron (strain ATCC 29148 / DSM 2079 / JCM 5827 / CCUG 10774 / NCTC 10582 / VPI-5482 / E50) protein is UPF0102 protein BT_2236.